Here is a 154-residue protein sequence, read N- to C-terminus: Myoglobin (154 aa).

Residues 2 to 148 (GLSDGEWQLV…FRNDMAAKYK (147 aa)) form the Globin domain. At Ser4 the chain carries Phosphoserine. His65 serves as a coordination point for nitrite. An O2-binding site is contributed by His65. Thr68 carries the post-translational modification Phosphothreonine. His94 contributes to the heme b binding site.

Belongs to the globin family. Monomeric.

The protein localises to the cytoplasm. Its subcellular location is the sarcoplasm. It carries out the reaction Fe(III)-heme b-[protein] + nitric oxide + H2O = Fe(II)-heme b-[protein] + nitrite + 2 H(+). It catalyses the reaction H2O2 + AH2 = A + 2 H2O. Its function is as follows. Monomeric heme protein which primary function is to store oxygen and facilitate its diffusion within muscle tissues. Reversibly binds oxygen through a pentacoordinated heme iron and enables its timely and efficient release as needed during periods of heightened demand. Depending on the oxidative conditions of tissues and cells, and in addition to its ability to bind oxygen, it also has a nitrite reductase activity whereby it regulates the production of bioactive nitric oxide. Under stress conditions, like hypoxia and anoxia, it also protects cells against reactive oxygen species thanks to its pseudoperoxidase activity. In Ornithorhynchus anatinus (Duckbill platypus), this protein is Myoglobin (MB).